Reading from the N-terminus, the 585-residue chain is Glutamate decarboxylase 2 (585 aa).

A compositionally biased stretch (low complexity) spans 1 to 14 (MASPGSGFWSFGSE). The disordered stretch occupies residues 1–24 (MASPGSGFWSFGSEDGSGDSENPG). 4 positions are modified to phosphoserine: Ser-3, Ser-6, Ser-10, and Ser-13. 2 S-palmitoyl cysteine lipidation sites follow: Cys-30 and Cys-45. 181-183 (QLS) lines the substrate pocket. Lys-396 is modified (N6-(pyridoxal phosphate)lysine). Arg-558 provides a ligand contact to substrate.

It belongs to the group II decarboxylase family. In terms of assembly, homodimer. Pyridoxal 5'-phosphate serves as cofactor. Post-translationally, phosphorylated; which does not affect kinetic parameters or subcellular location. Palmitoylated; which is required for presynaptic clustering.

Its subcellular location is the cytoplasm. It localises to the cytosol. The protein localises to the cytoplasmic vesicle. It is found in the presynaptic cell membrane. The protein resides in the golgi apparatus membrane. The catalysed reaction is L-glutamate + H(+) = 4-aminobutanoate + CO2. Its function is as follows. Catalyzes the production of GABA. This Homo sapiens (Human) protein is Glutamate decarboxylase 2.